The following is a 434-amino-acid chain: Serine--tRNA ligase (434 aa).

239-241 contributes to the L-serine binding site; sequence TAE. 270 to 272 contributes to the ATP binding site; that stretch reads RSE. Position 293 (Glu293) interacts with L-serine. ATP is bound at residue 357 to 360; the sequence is EISS. Residue Ser393 participates in L-serine binding.

Belongs to the class-II aminoacyl-tRNA synthetase family. Type-1 seryl-tRNA synthetase subfamily. In terms of assembly, homodimer. The tRNA molecule binds across the dimer.

Its subcellular location is the cytoplasm. The enzyme catalyses tRNA(Ser) + L-serine + ATP = L-seryl-tRNA(Ser) + AMP + diphosphate + H(+). The catalysed reaction is tRNA(Sec) + L-serine + ATP = L-seryl-tRNA(Sec) + AMP + diphosphate + H(+). The protein operates within aminoacyl-tRNA biosynthesis; selenocysteinyl-tRNA(Sec) biosynthesis; L-seryl-tRNA(Sec) from L-serine and tRNA(Sec): step 1/1. Catalyzes the attachment of serine to tRNA(Ser). Is also able to aminoacylate tRNA(Sec) with serine, to form the misacylated tRNA L-seryl-tRNA(Sec), which will be further converted into selenocysteinyl-tRNA(Sec). This Mesorhizobium japonicum (strain LMG 29417 / CECT 9101 / MAFF 303099) (Mesorhizobium loti (strain MAFF 303099)) protein is Serine--tRNA ligase.